A 57-amino-acid chain; its full sequence is Preprotein translocase subunit SecG (57 aa).

The Cytoplasmic portion of the chain corresponds to 1–33 (MPSSKKKKENVPVMSMAGLIRYYEEEHEKYKVD). A helical membrane pass occupies residues 34 to 55 (PIYVIIASIVLVAVVVAVTKII). Topologically, residues 56–57 (PP) are extracellular.

This sequence belongs to the SEC61-beta family. As to quaternary structure, component of the protein translocase complex. Heterotrimer consisting of alpha (SecY), beta (SecG) and gamma (SecE) subunits. Can form oligomers of the heterotrimer.

The protein localises to the cell membrane. Its function is as follows. Involved in protein export. The function of the beta subunit is unknown, but it may be involved in stabilization of the trimeric complex. In Metallosphaera sedula (strain ATCC 51363 / DSM 5348 / JCM 9185 / NBRC 15509 / TH2), this protein is Preprotein translocase subunit SecG.